A 461-amino-acid polypeptide reads, in one-letter code: Ribonuclease inhibitor (461 aa).

N-acetylserine is present on Ser2. Residues 2-11 (SLDIQSLDIQ) are 2 X 5 AA tandem repeats of S-L-D-I-Q. LRR repeat units follow at residues 20–48 (WAEL…CKDI), 49–76 (SSAL…VHCV), 77–105 (LQGL…CGVL), 106–133 (SSTL…LQLL), 134–162 (CEGL…CEPL), 163–190 (ASVL…VRVL), 191–219 (CQGL…CRDL), 220–247 (CGIV…MAEL), 248–276 (CPGL…CGDL), 277–304 (CRVL…ARLL), 305–333 (CETL…CSHF), 334–361 (SSVL…VREL), 362–390 (CQGL…CSSL), 391–418 (AATL…ILQL), and 419–447 (VESV…EDRL). Thr82 bears the Phosphothreonine mark. Ser91 is modified (phosphoserine).

In terms of assembly, forms high-affinity heterodimers with RNASE1, ANG and RNASE2. Post-translationally, the N-terminus is blocked. At least 30 of the 32 cysteine residues are in the reduced form.

It is found in the cytoplasm. The protein localises to the nucleus. In terms of biological role, ribonuclease inhibitor which inhibits RNASE1, RNASE2 and angiogenin (ANG). May play a role in redox homeostasis. Required to inhibit the cytotoxic tRNA ribonuclease activity of ANG in the cytoplasm in absence of stress. Relocates to the nucleus in response to stress, relieving inhibition of ANG in the cytoplasm, and inhibiting the angiogenic activity of ANG in the nucleus. In Homo sapiens (Human), this protein is Ribonuclease inhibitor.